The primary structure comprises 175 residues: Large ribosomal subunit protein uL10 (175 aa).

The protein belongs to the universal ribosomal protein uL10 family. Part of the ribosomal stalk of the 50S ribosomal subunit. The N-terminus interacts with L11 and the large rRNA to form the base of the stalk. The C-terminus forms an elongated spine to which L12 dimers bind in a sequential fashion forming a multimeric L10(L12)X complex.

Forms part of the ribosomal stalk, playing a central role in the interaction of the ribosome with GTP-bound translation factors. This Psychrobacter arcticus (strain DSM 17307 / VKM B-2377 / 273-4) protein is Large ribosomal subunit protein uL10.